Reading from the N-terminus, the 330-residue chain is Probable L-lactate dehydrogenase (330 aa).

Residues Arg-105, Asn-137, and Arg-168 each coordinate substrate. Residue Asn-137 participates in NAD(+) binding. His-192 serves as the catalytic Proton acceptor.

Belongs to the LDH/MDH superfamily. LDH family. As to quaternary structure, homotetramer.

Its subcellular location is the cytoplasm. The catalysed reaction is (S)-lactate + NAD(+) = pyruvate + NADH + H(+). The protein operates within fermentation; pyruvate fermentation to lactate; (S)-lactate from pyruvate: step 1/1. The sequence is that of Probable L-lactate dehydrogenase from Schizosaccharomyces pombe (strain 972 / ATCC 24843) (Fission yeast).